The following is a 275-amino-acid chain: Large ribosomal subunit protein uL2 (275 aa).

The tract at residues 212–275 is disordered; the sequence is NRHRGIRPQT…DKLIISRRKK (64 aa). Basic residues predominate over residues 257–275; the sequence is YKTRRKKPSDKLIISRRKK.

Belongs to the universal ribosomal protein uL2 family. In terms of assembly, part of the 50S ribosomal subunit. Forms a bridge to the 30S subunit in the 70S ribosome.

One of the primary rRNA binding proteins. Required for association of the 30S and 50S subunits to form the 70S ribosome, for tRNA binding and peptide bond formation. It has been suggested to have peptidyltransferase activity; this is somewhat controversial. Makes several contacts with the 16S rRNA in the 70S ribosome. This is Large ribosomal subunit protein uL2 from Nitratiruptor sp. (strain SB155-2).